We begin with the raw amino-acid sequence, 258 residues long: Ribosomal RNA small subunit methyltransferase A (258 aa).

S-adenosyl-L-methionine is bound by residues His-13, Leu-15, Gly-40, Glu-61, Asp-86, and Asn-106.

This sequence belongs to the class I-like SAM-binding methyltransferase superfamily. rRNA adenine N(6)-methyltransferase family. RsmA subfamily.

It localises to the cytoplasm. It catalyses the reaction adenosine(1518)/adenosine(1519) in 16S rRNA + 4 S-adenosyl-L-methionine = N(6)-dimethyladenosine(1518)/N(6)-dimethyladenosine(1519) in 16S rRNA + 4 S-adenosyl-L-homocysteine + 4 H(+). In terms of biological role, specifically dimethylates two adjacent adenosines (A1518 and A1519) in the loop of a conserved hairpin near the 3'-end of 16S rRNA in the 30S particle. May play a critical role in biogenesis of 30S subunits. This chain is Ribosomal RNA small subunit methyltransferase A, found in Coxiella burnetii (strain CbuG_Q212) (Coxiella burnetii (strain Q212)).